The sequence spans 637 residues: Chaperone protein DnaK (637 aa).

Thr-196 bears the Phosphothreonine; by autocatalysis mark. 2 disordered regions span residues 503-525 and 598-637; these read AEIN…RKEE and SGAG…DDKK. Residues 598-619 are compositionally biased toward low complexity; it reads SGAGAAQAQPEAPQNSGSSQSS.

The protein belongs to the heat shock protein 70 family.

Functionally, acts as a chaperone. The sequence is that of Chaperone protein DnaK from Chlorobium chlorochromatii (strain CaD3).